Reading from the N-terminus, the 318-residue chain is Deoxyribose-phosphate aldolase (318 aa).

Residue Asp-155 is the Proton donor/acceptor of the active site. The Schiff-base intermediate with acetaldehyde role is filled by Lys-218. Residue Lys-254 is the Proton donor/acceptor of the active site.

It belongs to the DeoC/FbaB aldolase family. DeoC type 2 subfamily. Interacts with YBX1.

It is found in the cytoplasm. The protein localises to the cytoplasmic granule. It localises to the nucleus. It catalyses the reaction 2-deoxy-D-ribose 5-phosphate = D-glyceraldehyde 3-phosphate + acetaldehyde. Its pathway is carbohydrate degradation; 2-deoxy-D-ribose 1-phosphate degradation; D-glyceraldehyde 3-phosphate and acetaldehyde from 2-deoxy-alpha-D-ribose 1-phosphate: step 2/2. Its function is as follows. Catalyzes a reversible aldol reaction between acetaldehyde and D-glyceraldehyde 3-phosphate to generate 2-deoxy-D-ribose 5-phosphate. Participates in stress granule (SG) assembly. May allow ATP production from extracellular deoxyinosine in conditions of energy deprivation. The chain is Deoxyribose-phosphate aldolase (DERA) from Bos taurus (Bovine).